A 101-amino-acid chain; its full sequence is MVKHSKGYRTRSRSLLRKSPRERGAVPSLSKLMVEYKEGDNVVVKINPSVHQGMPHRRYQGKVGKIIGKRGRAYLVSVTLGDKEKVIIVRPEHLVPFNSSG.

Basic residues predominate over residues 1–18 (MVKHSKGYRTRSRSLLRK). The tract at residues 1–24 (MVKHSKGYRTRSRSLLRKSPRERG) is disordered.

It belongs to the eukaryotic ribosomal protein eL21 family.

This is Large ribosomal subunit protein eL21 (rpl21e) from Saccharolobus solfataricus (strain ATCC 35092 / DSM 1617 / JCM 11322 / P2) (Sulfolobus solfataricus).